The chain runs to 303 residues: Quinolinate synthase (303 aa).

Iminosuccinate is bound by residues His25 and Ser42. Cys87 contributes to the [4Fe-4S] cluster binding site. Residues 113-115 and Ser130 contribute to the iminosuccinate site; that span reads YVN. Cys174 is a [4Fe-4S] cluster binding site. Residues 200–202 and Thr217 each bind iminosuccinate; that span reads HPE. Cys260 contributes to the [4Fe-4S] cluster binding site.

Belongs to the quinolinate synthase family. Type 2 subfamily. Homodimer. [4Fe-4S] cluster is required as a cofactor.

The protein localises to the cytoplasm. It catalyses the reaction iminosuccinate + dihydroxyacetone phosphate = quinolinate + phosphate + 2 H2O + H(+). It participates in cofactor biosynthesis; NAD(+) biosynthesis; quinolinate from iminoaspartate: step 1/1. Its function is as follows. Catalyzes the condensation of iminoaspartate with dihydroxyacetone phosphate to form quinolinate. In Pyrococcus furiosus (strain ATCC 43587 / DSM 3638 / JCM 8422 / Vc1), this protein is Quinolinate synthase.